A 726-amino-acid chain; its full sequence is Prolyl endopeptidase-like (726 aa).

Phosphoserine is present on serine 138. Active-site charge relay system residues include serine 558, aspartate 644, and histidine 689.

Belongs to the peptidase S9A family. In terms of assembly, homodimer. Interacts with the AP-1 complex.

Its subcellular location is the cytoplasm. The protein resides in the cytosol. The protein localises to the golgi apparatus. It is found in the trans-Golgi network. It localises to the cytoskeleton. Its subcellular location is the nucleus. Its function is as follows. Serine peptidase whose precise substrate specificity remains unclear. Does not cleave peptides after a arginine or lysine residue. Regulates trans-Golgi network morphology and sorting by regulating the membrane binding of the AP-1 complex. May play a role in the regulation of synaptic vesicle exocytosis. The chain is Prolyl endopeptidase-like (Prepl) from Rattus norvegicus (Rat).